Consider the following 208-residue polypeptide: Uracil phosphoribosyltransferase (208 aa).

5-phospho-alpha-D-ribose 1-diphosphate-binding positions include arginine 78, arginine 103, and 130 to 138; that span reads DPMLATGGS. Residues isoleucine 193 and 198-200 each bind uracil; that span reads GDA. Residue aspartate 199 coordinates 5-phospho-alpha-D-ribose 1-diphosphate.

This sequence belongs to the UPRTase family. The cofactor is Mg(2+).

It catalyses the reaction UMP + diphosphate = 5-phospho-alpha-D-ribose 1-diphosphate + uracil. It functions in the pathway pyrimidine metabolism; UMP biosynthesis via salvage pathway; UMP from uracil: step 1/1. Allosterically activated by GTP. Its function is as follows. Catalyzes the conversion of uracil and 5-phospho-alpha-D-ribose 1-diphosphate (PRPP) to UMP and diphosphate. The sequence is that of Uracil phosphoribosyltransferase from Salmonella agona (strain SL483).